The following is a 3354-amino-acid chain: Cadherin-23 (3354 aa).

The first 23 residues, 1–23 (MRYSLVTCYAVLWLLMLVPGSWG), serve as a signal peptide directing secretion. Residues 24-3064 (QVNRLPFFTN…SVQLPDDMSA (3041 aa)) lie on the Extracellular side of the membrane. 27 consecutive Cadherin domains span residues 34 to 132 (HFFD…APTF), 133 to 236 (HNQP…DPIF), 237 to 348 (INLP…APEF), 349 to 460 (NSSE…RPIF), 461 to 561 (SQPL…VPTF), 562 to 671 (QKDA…PPTF), 672 to 784 (SKPA…APYY), 779 to 890 (KDAP…DPTF), 891 to 995 (RNLP…TPTF), 996 to 1102 (FPAV…RPIF), 1103 to 1208 (LQSS…APVF), 1210 to 1313 (QQQY…AVQF), 1314 to 1418 (SNAS…SPRF), 1420 to 1527 (FTSD…PPVI), 1529 to 1634 (SPFG…APVF), 1635 to 1744 (QQPH…VPTF), 1745 to 1851 (PRDY…DPVL), 1852 to 1959 (LNLP…HPLF), 1960 to 2069 (TEGT…WPTF), 2070 to 2174 (SPPT…RPEF), 2175 to 2293 (LNPI…TPQF), 2297 to 2402 (GITY…NPIF), 2403 to 2509 (DQPS…RPQF), 2510 to 2611 (SKPQ…RPVF), 2614 to 2722 (PPNG…EPLF), 2729 to 2846 (SPQY…PPRF), and 2847 to 2975 (TKAE…EEEF). 2 N-linked (GlcNAc...) asparagine glycosylation sites follow: Asn155 and Asn206. Residues Asn349, Asn393, Asn434, Asn466, Asn472, Asn602, Asn694, Asn765, Asn810, Asn827, Asn941, Asn1001, Asn1018, Asn1171, Asn1282, Asn1315, Asn1473, Asn1534, Asn1651, Asn1667, Asn1818, Asn1857, Asn1889, Asn1902, Asn2014, Asn2050, Asn2129, Asn2168, Asn2195, Asn2263, Asn2357, and Asn2369 are each glycosylated (N-linked (GlcNAc...) asparagine). Asn2578, Asn2616, Asn2749, Asn2808, Asn2877, Asn2896, Asn2941, and Asn2981 each carry an N-linked (GlcNAc...) asparagine glycan. Residues 3065–3085 (LQMAIIVLAILLFLAAMLFVL) traverse the membrane as a helical segment. The Cytoplasmic portion of the chain corresponds to 3086 to 3354 (MNWYYRTIHK…MESPLEITEL (269 aa)).

As to quaternary structure, interacts with USH1C and USH1G. antiparallel heterodimer with PCDH15. Isoform C1: Interacts with CAMSAP3; leading to inhibit CAMSAP3 ability to induce microtubule bundle formation. In terms of tissue distribution, in adult animals relatively high levels of expression are found in testis, skeletal muscle, heart, eye and thymus, and lower expression in kidney, lung and brain. Found in the sensory hair cells of the inner ear.

It localises to the cell membrane. Its function is as follows. Cadherins are calcium-dependent cell adhesion proteins. They preferentially interact with themselves in a homophilic manner in connecting cells. CDH23 is required for establishing and/or maintaining the proper organization of the stereocilia bundle of hair cells in the cochlea and the vestibule during late embryonic/early postnatal development. It is part of the functional network formed by USH1C, USH1G, CDH23 and MYO7A that mediates mechanotransduction in cochlear hair cells. Required for normal hearing. This chain is Cadherin-23 (Cdh23), found in Mus musculus (Mouse).